A 343-amino-acid chain; its full sequence is N-acetyl-gamma-glutamyl-phosphate reductase (343 aa).

Residue Cys146 is part of the active site.

Belongs to the NAGSA dehydrogenase family. Type 1 subfamily.

The protein localises to the cytoplasm. The catalysed reaction is N-acetyl-L-glutamate 5-semialdehyde + phosphate + NADP(+) = N-acetyl-L-glutamyl 5-phosphate + NADPH + H(+). It functions in the pathway amino-acid biosynthesis; L-arginine biosynthesis; N(2)-acetyl-L-ornithine from L-glutamate: step 3/4. Functionally, catalyzes the NADPH-dependent reduction of N-acetyl-5-glutamyl phosphate to yield N-acetyl-L-glutamate 5-semialdehyde. The polypeptide is N-acetyl-gamma-glutamyl-phosphate reductase (Paenarthrobacter aurescens (strain TC1)).